Here is a 492-residue protein sequence, read N- to C-terminus: Protein nucleotidyltransferase YdiU (492 aa).

The ATP site is built by Gly-88, Gly-90, Arg-91, Lys-111, Asp-123, Gly-124, Arg-174, and Arg-181. The active-site Proton acceptor is the Asp-250. Residues Asn-251 and Asp-260 each coordinate Mg(2+). Position 260 (Asp-260) interacts with ATP.

The protein belongs to the SELO family. It depends on Mg(2+) as a cofactor. Mn(2+) is required as a cofactor.

The catalysed reaction is L-seryl-[protein] + ATP = 3-O-(5'-adenylyl)-L-seryl-[protein] + diphosphate. The enzyme catalyses L-threonyl-[protein] + ATP = 3-O-(5'-adenylyl)-L-threonyl-[protein] + diphosphate. It catalyses the reaction L-tyrosyl-[protein] + ATP = O-(5'-adenylyl)-L-tyrosyl-[protein] + diphosphate. It carries out the reaction L-histidyl-[protein] + UTP = N(tele)-(5'-uridylyl)-L-histidyl-[protein] + diphosphate. The catalysed reaction is L-seryl-[protein] + UTP = O-(5'-uridylyl)-L-seryl-[protein] + diphosphate. The enzyme catalyses L-tyrosyl-[protein] + UTP = O-(5'-uridylyl)-L-tyrosyl-[protein] + diphosphate. Its function is as follows. Nucleotidyltransferase involved in the post-translational modification of proteins. It can catalyze the addition of adenosine monophosphate (AMP) or uridine monophosphate (UMP) to a protein, resulting in modifications known as AMPylation and UMPylation. The chain is Protein nucleotidyltransferase YdiU from Rhodopseudomonas palustris (strain ATCC BAA-98 / CGA009).